Here is a 348-residue protein sequence, read N- to C-terminus: Centromere protein N-B (348 aa).

This sequence belongs to the CENP-N/CHL4 family.

It localises to the nucleus. It is found in the chromosome. Its subcellular location is the centromere. Functionally, probable component of a centromeric complex involved in assembly of kinetochore proteins, mitotic progression and chromosome segregation. The polypeptide is Centromere protein N-B (cenpn-b) (Xenopus laevis (African clawed frog)).